The following is a 176-amino-acid chain: Inorganic pyrophosphatase (176 aa).

Substrate is bound by residues K30, R44, and Y56. D66, D71, and D103 together coordinate Mg(2+). Residue Y142 coordinates substrate.

The protein belongs to the PPase family. As to quaternary structure, homohexamer. The cofactor is Mg(2+).

It localises to the cytoplasm. It carries out the reaction diphosphate + H2O = 2 phosphate + H(+). Functionally, catalyzes the hydrolysis of inorganic pyrophosphate (PPi) forming two phosphate ions. The chain is Inorganic pyrophosphatase from Escherichia coli O6:H1 (strain CFT073 / ATCC 700928 / UPEC).